The sequence spans 253 residues: MIIAVSGKGGVGKTAFTTLLIKALSKKTNSILVVDADPDSNLPETLGVEVEKTVGDIREELKKLVERDEIPAGMTKLDYLRSKIFEILVETKYYDLLVMGRPEGSGCYCSVNNWLRQIIDNLAKDYEFVVIDTEAGLEHLSRRTTQNVDVMIVITDASKRGLGTAKRIKKLANELEVKFKDIYVVANKVKPEYEELIDNYAKELGLNLIGKLPYNKEIAEYDLKGIPLWNLPENNEVYKKVEEIAEKIINKKF.

Residue 7 to 14 participates in ATP binding; sequence GKGGVGKT.

It to M.jannaschii MJ0084 and MJ0823.

This is an uncharacterized protein from Methanocaldococcus jannaschii (strain ATCC 43067 / DSM 2661 / JAL-1 / JCM 10045 / NBRC 100440) (Methanococcus jannaschii).